Consider the following 290-residue polypeptide: Probable protein phosphatase 2C 62 (290 aa).

In terms of domain architecture, PPM-type phosphatase spans 38 to 288 (KHGYHLVKGK…DDISCIVVKF (251 aa)). 4 residues coordinate Mn(2+): D75, G76, D240, and D279.

Belongs to the PP2C family. The cofactor is Mg(2+). Mn(2+) is required as a cofactor.

It catalyses the reaction O-phospho-L-seryl-[protein] + H2O = L-seryl-[protein] + phosphate. It carries out the reaction O-phospho-L-threonyl-[protein] + H2O = L-threonyl-[protein] + phosphate. The polypeptide is Probable protein phosphatase 2C 62 (Oryza sativa subsp. japonica (Rice)).